Consider the following 447-residue polypeptide: UDP-N-acetylmuramate--L-alanine ligase (447 aa).

108-114 (GSHGKTS) serves as a coordination point for ATP.

The protein belongs to the MurCDEF family.

The protein resides in the cytoplasm. It catalyses the reaction UDP-N-acetyl-alpha-D-muramate + L-alanine + ATP = UDP-N-acetyl-alpha-D-muramoyl-L-alanine + ADP + phosphate + H(+). It participates in cell wall biogenesis; peptidoglycan biosynthesis. In terms of biological role, cell wall formation. This Listeria monocytogenes serovar 1/2a (strain ATCC BAA-679 / EGD-e) protein is UDP-N-acetylmuramate--L-alanine ligase.